A 305-amino-acid chain; its full sequence is Small ribosomal subunit biogenesis GTPase RsgA (305 aa).

A CP-type G domain is found at 67–224; sequence SSELVRPAVA…VADTPGFSSF (158 aa). Residues 116 to 119 and 166 to 174 each bind GTP; these read NKID and GQSGVGKST. The Zn(2+) site is built by C248, C253, H255, and C261.

Belongs to the TRAFAC class YlqF/YawG GTPase family. RsgA subfamily. As to quaternary structure, monomer. Associates with 30S ribosomal subunit, binds 16S rRNA. Zn(2+) is required as a cofactor.

It is found in the cytoplasm. In terms of biological role, one of several proteins that assist in the late maturation steps of the functional core of the 30S ribosomal subunit. Helps release RbfA from mature subunits. May play a role in the assembly of ribosomal proteins into the subunit. Circularly permuted GTPase that catalyzes slow GTP hydrolysis, GTPase activity is stimulated by the 30S ribosomal subunit. The protein is Small ribosomal subunit biogenesis GTPase RsgA of Ruminiclostridium cellulolyticum (strain ATCC 35319 / DSM 5812 / JCM 6584 / H10) (Clostridium cellulolyticum).